The sequence spans 339 residues: Anthranilate phosphoribosyltransferase (339 aa).

5-phospho-alpha-D-ribose 1-diphosphate contacts are provided by residues G80, 83-84, T88, 90-93, 108-116, and S120; these read GD, NIST, and KHGNRSVSS. G80 contacts anthranilate. S92 is a Mg(2+) binding site. Position 111 (N111) interacts with anthranilate. An anthranilate-binding site is contributed by R166. 2 residues coordinate Mg(2+): D225 and E226.

Belongs to the anthranilate phosphoribosyltransferase family. As to quaternary structure, homodimer. Mg(2+) serves as cofactor.

It catalyses the reaction N-(5-phospho-beta-D-ribosyl)anthranilate + diphosphate = 5-phospho-alpha-D-ribose 1-diphosphate + anthranilate. It functions in the pathway amino-acid biosynthesis; L-tryptophan biosynthesis; L-tryptophan from chorismate: step 2/5. In terms of biological role, catalyzes the transfer of the phosphoribosyl group of 5-phosphorylribose-1-pyrophosphate (PRPP) to anthranilate to yield N-(5'-phosphoribosyl)-anthranilate (PRA). This is Anthranilate phosphoribosyltransferase from Moorella thermoacetica (strain ATCC 39073 / JCM 9320).